The following is a 448-amino-acid chain: tRNA(Ile)-lysidine synthase (448 aa).

ATP is bound at residue 25 to 30 (SGGSDS).

Belongs to the tRNA(Ile)-lysidine synthase family.

The protein localises to the cytoplasm. The enzyme catalyses cytidine(34) in tRNA(Ile2) + L-lysine + ATP = lysidine(34) in tRNA(Ile2) + AMP + diphosphate + H(+). Ligates lysine onto the cytidine present at position 34 of the AUA codon-specific tRNA(Ile) that contains the anticodon CAU, in an ATP-dependent manner. Cytidine is converted to lysidine, thus changing the amino acid specificity of the tRNA from methionine to isoleucine. The polypeptide is tRNA(Ile)-lysidine synthase (Brucella suis biovar 1 (strain 1330)).